The sequence spans 252 residues: MERVLIVNADDFGLSKGQNYGIIEACRNGVVTSTTALVNGAAIDHAAQLGRSTPELAVGMHFVLTLGEPLSAMPGLTRDGRLGKWIWQQAEEDSLPLEEIAHELACQYHRFVELFGHEPTHIDSHHHVHMFAQIYPIVAAFAREKGIALRIDRQVAAQSGLDQQAARSSAGFSSEFYGEAVSEELFLQTLDASIARGERSLEVMCHPAYVDRIIMGSAYCYPRLDELDVLTAASLKAAVADRGYRLGTYRDV.

2 residues coordinate Mg(2+): histidine 61 and histidine 125.

Belongs to the YdjC deacetylase family. ChbG subfamily. Homodimer. The cofactor is Mg(2+).

It localises to the cytoplasm. The enzyme catalyses N,N'-diacetylchitobiose + H2O = N-acetyl-beta-D-glucosaminyl-(1-&gt;4)-D-glucosamine + acetate. It carries out the reaction diacetylchitobiose-6'-phosphate + H2O = N'-monoacetylchitobiose-6'-phosphate + acetate. The protein operates within glycan degradation; chitin degradation. Involved in the degradation of chitin. ChbG is essential for growth on the acetylated chitooligosaccharides chitobiose and chitotriose but is dispensable for growth on cellobiose and chitosan dimer, the deacetylated form of chitobiose. Deacetylation of chitobiose-6-P and chitotriose-6-P is necessary for both the activation of the chb promoter by the regulatory protein ChbR and the hydrolysis of phosphorylated beta-glucosides by the phospho-beta-glucosidase ChbF. Catalyzes the removal of only one acetyl group from chitobiose-6-P to yield monoacetylchitobiose-6-P, the inducer of ChbR and the substrate of ChbF. The polypeptide is Chitooligosaccharide deacetylase (Klebsiella pneumoniae subsp. pneumoniae (strain ATCC 700721 / MGH 78578)).